The sequence spans 1017 residues: Adhesion G-protein coupled receptor G2 (1017 aa).

The first 37 residues, 1–37 (MVFSVRQCGHVGRTEEVLLTFKIFLVIICLHVVLVTS), serve as a signal peptide directing secretion. Over 38–627 (LEEDTDNSSL…TSVLPAQMMA (590 aa)) the chain is Extracellular. 9 N-linked (GlcNAc...) asparagine glycosylation sites follow: Asn44, Asn85, Asn99, Asn111, Asn117, Asn144, Asn162, Asn186, and Asn194. Residues 301–366 (PLSPQPSAPI…NTTSAPPVQT (66 aa)) form a disordered region. The segment covering 308–320 (APIASSPAIDMPP) has biased composition (low complexity). Polar residues-rich tracts occupy residues 321–335 (QSET…THVS) and 344–366 (SFSS…PVQT). Asn357, Asn370, Asn435, Asn438, Asn456, Asn461, Asn528, Asn542, Asn547, Asn551, and Asn597 each carry an N-linked (GlcNAc...) asparagine glycan. In terms of domain architecture, GAIN-B spans 462–619 (TTTFVAQDPA…GVLLDLSRTS (158 aa)). Intrachain disulfides connect Cys570-Cys601 and Cys589-Cys603. Residues 570–619 (CVFWDLGRNGGRGGWSDNGCSVKDRRLNETICTCSHLTSFGVLLDLSRTS) form a GPS region. The segment at 608 to 619 (SFGVLLDLSRTS) is stachel. A helical transmembrane segment spans residues 628–648 (LTFITYIGCGLSSIFLSVTLV). Residues 649 to 667 (TYIAFEKIRRDYPSKILIQ) are Cytoplasmic-facing. The helical transmembrane segment at 668-688 (LCAALLLLNLVFLLDSWIALY) threads the bilayer. At 689–693 (KMQGL) the chain is on the extracellular side. Residues 694–714 (CISVAVFLHYFLLVSFTWMGL) traverse the membrane as a helical segment. Cys694 and Cys778 form a disulfide bridge. The Cytoplasmic portion of the chain corresponds to 715-737 (EAFHMYLALVKVFNTYIRKYILK). A helical transmembrane segment spans residues 738–758 (FCIVGWGVPAVVVTIILTISP). Residues 759 to 789 (DNYGLGSYGKFPNGSPDDFCWINNNAVFYIT) are Extracellular-facing. The chain crosses the membrane as a helical span at residues 790 to 810 (VVGYFCVIFLLNVSMFIVVLV). Residues 811–834 (QLCRIKKKKQLGAQRKTSIQDLRS) lie on the Cytoplasmic side of the membrane. A helical transmembrane segment spans residues 835 to 855 (IAGLTFLLGITWGFAFFAWGP). Residues 856-857 (VN) are Extracellular-facing. A glycan (N-linked (GlcNAc...) asparagine) is linked at Asn857. A helical membrane pass occupies residues 858–878 (VTFMYLFAIFNTLQGFFIFIF). Asn868 contacts 3beta-hydroxyandrost-5-en-17-one. At 879–1017 (YCVAKENVRK…RGSLHFIEQM (139 aa)) the chain is on the cytoplasmic side. The tract at residues 918 to 939 (QTVNQGVSSSSNSLQSSSNSTN) is disordered. Residue Ser1010 is modified to Phosphoserine.

This sequence belongs to the G-protein coupled receptor 2 family. Adhesion G-protein coupled receptor (ADGR) subfamily. In terms of assembly, heterodimer of 2 chains generated by proteolytic processing; the large extracellular N-terminal fragment and the membrane-bound C-terminal fragment predominantly remain associated and non-covalently linked. Interacts with CFTR. Proteolytically cleaved into 2 subunits, an extracellular subunit and a seven-transmembrane subunit. Post-translationally, highly glycosylated. As to expression, epididymis-specific expression (at protein level). Both subunits are associated with apical membranes of efferent ductule and proximal epididymal duct epithelia. Mainly expressed in the nonciliated principal cells of the proximal excurrent ducts. Specifically over-expressed in Ewing sarcomas but also up-regulated in a number of carcinomas derived from prostate, kidney or lung.

It localises to the apical cell membrane. Forms a heterodimer of 2 chains generated by proteolytic processing that remain associated through non-covalent interactions mediated by the GAIN-B domain. In the inactivated receptor, the Stachel sequence (also named stalk) is embedded in the GAIN-B domain, where it adopts a beta-strand conformation. On activation, the Stachel moves into the 7 transmembrane region and adopts a twisted hook-shaped configuration that forms contacts within the receptor, leading to coupling of a G-alpha protein, which activates signaling. The cleaved GAIN-B and N-terminal domains can then dissociate from the rest of the receptor. Deoxycorticosterone (DOC) acts as an antagonist of ADGRG2. Adhesion G-protein coupled receptor (aGPCR) for steroid hormones, such as dehydroepiandrosterone (DHEA; also named 3beta-hydroxyandrost-5-en-17-one) and androstenedione. Involved in a signal transduction pathway controlling epididymal function and male fertility. Ligand binding causes a conformation change that triggers signaling via guanine nucleotide-binding proteins (G proteins) and modulates the activity of downstream effectors, such as adenylate cyclase. ADGRG2 is coupled to G(s) G proteins and mediates activation of adenylate cyclase activity. Also able to couple with G(q) G proteins in vitro. Together with CFTR, required to promote fluid reabsorption within efferent ductule. This Homo sapiens (Human) protein is Adhesion G-protein coupled receptor G2.